Reading from the N-terminus, the 87-residue chain is Defensin-like protein 100 (87 aa).

The first 29 residues, methionine 1–glycine 29, serve as a signal peptide directing secretion. 4 cysteine pairs are disulfide-bonded: cysteine 31-cysteine 79, cysteine 38-cysteine 64, cysteine 44-cysteine 76, and cysteine 48-cysteine 78.

This sequence belongs to the DEFL family.

It localises to the secreted. The chain is Defensin-like protein 100 from Arabidopsis thaliana (Mouse-ear cress).